A 640-amino-acid chain; its full sequence is Envelope glycoprotein (640 aa).

The first 32 residues, 1-32 (MACSTFSKPLKDKINPWGPLIILGILIRAGVS), serve as a signal peptide directing secretion. A receptor-binding domain (RBD) region spans residues 32-236 (SVQHDSPHKV…RVLNIGPRVP (205 aa)). Topologically, residues 33-584 (VQHDSPHKVF…FNRSPWFTTL (552 aa)) are extracellular. N-linked (GlcNAc...) asparagine; by host glycosylation is found at asparagine 43 and asparagine 58. Intrachain disulfides connect cysteine 113–cysteine 130 and cysteine 122–cysteine 135. Residues 259-284 (RPPQPPPPGAASIVPETAPPSQQPGT) are disordered. N-linked (GlcNAc...) asparagine; by host glycosylation is present at asparagine 300. Disulfide bonds link cysteine 310–cysteine 313, cysteine 310–cysteine 537, and cysteine 529–cysteine 536. Residues 310–313 (CWLC) carry the CXXC motif. Residues asparagine 332, asparagine 339, asparagine 372, and asparagine 408 are each glycosylated (N-linked (GlcNAc...) asparagine; by host). Residues 446-466 (VSLTLALLLGGLTMGGIAAGV) are fusion peptide. The stretch at 477 to 511 (QQFQQLHAAVQDDLKEVEKSITNLEKSLTSLSEVV) forms a coiled coil. The immunosuppression stretch occupies residues 512–528 (LQNRRGLDLLFLKEGGL). The short motif at 529-537 (CAALKEECC) is the CX6CC element. The helical transmembrane segment at 585–605 (ISTIMGPLIILLLILLFGPCI) threads the bilayer. Cysteine 604 carries S-palmitoyl cysteine; by host lipidation. The Cytoplasmic portion of the chain corresponds to 606–640 (LNRLVQFVKDRISVVQALVLTQQYHQLKPLEYEPQ). The short motif at 629-632 (YHQL) is the YXXL motif; contains endocytosis signal element.

As to quaternary structure, the mature envelope protein (Env) consists of a trimer of SU-TM heterodimers attached by a labile interchain disulfide bond. Specific enzymatic cleavages in vivo yield mature proteins. Envelope glycoproteins are synthesized as an inactive precursor that is N-glycosylated and processed likely by host cell furin or by a furin-like protease in the Golgi to yield the mature SU and TM proteins. The cleavage site between SU and TM requires the minimal sequence [KR]-X-[KR]-R. The R-peptide is released from the C-terminus of the cytoplasmic tail of the TM protein upon particle formation as a result of proteolytic cleavage by the viral protease. Cleavage of this peptide is required for TM to become fusogenic. In terms of processing, the CXXC motif is highly conserved across a broad range of retroviral envelope proteins. It is thought to participate in the formation of a labile disulfide bond possibly with the CX6CC motif present in the transmembrane protein. Isomerization of the intersubunit disulfide bond to an SU intrachain disulfide bond is thought to occur upon receptor recognition in order to allow membrane fusion. Post-translationally, the transmembrane protein is palmitoylated. The R-peptide is palmitoylated.

The protein resides in the virion membrane. The protein localises to the host cell membrane. The surface protein (SU) attaches the virus to the host cell by binding to its receptor. This interaction triggers the refolding of the transmembrane protein (TM) and is thought to activate its fusogenic potential by unmasking its fusion peptide. Fusion occurs at the host cell plasma membrane. Functionally, the transmembrane protein (TM) acts as a class I viral fusion protein. Under the current model, the protein has at least 3 conformational states: pre-fusion native state, pre-hairpin intermediate state, and post-fusion hairpin state. During viral and target cell membrane fusion, the coiled coil regions (heptad repeats) assume a trimer-of-hairpins structure, positioning the fusion peptide in close proximity to the C-terminal region of the ectodomain. The formation of this structure appears to drive apposition and subsequent fusion of viral and target cell membranes. Membranes fusion leads to delivery of the nucleocapsid into the cytoplasm. The protein is Envelope glycoprotein (env) of Rauscher mink cell focus-inducing virus.